Consider the following 172-residue polypeptide: Small ribosomal subunit protein uS5 (172 aa).

An S5 DRBM domain is found at 16–79 (LKEKLVHINR…EDGKKNVVKV (64 aa)).

The protein belongs to the universal ribosomal protein uS5 family. Part of the 30S ribosomal subunit. Contacts proteins S4 and S8.

Its function is as follows. With S4 and S12 plays an important role in translational accuracy. Functionally, located at the back of the 30S subunit body where it stabilizes the conformation of the head with respect to the body. This chain is Small ribosomal subunit protein uS5, found in Prosthecochloris aestuarii (strain DSM 271 / SK 413).